The sequence spans 358 residues: Cilia- and flagella-associated protein 263 (358 aa).

Coiled-coil stretches lie at residues Tyr93–Asn138, Arg176–Glu200, and Arg266–Ser343.

This sequence belongs to the CFAP263 family. In terms of assembly, forms a complex with CFAP184; the interaction is required for functional activity in cilia. Interacts with HAP1 and PCM1.

It is found in the cytoplasm. Its subcellular location is the cytoskeleton. It localises to the microtubule organizing center. The protein resides in the centrosome. The protein localises to the centriolar satellite. It is found in the cell projection. Its subcellular location is the cilium. Its function is as follows. Component of centriolar satellites contributing to primary cilium formation. In complex with CFAP263, acts as a regulator of ciliary beating that connects radial spoke 3 (RS3) to the inner dynein arm (IDA) and the nexin-dynein regulatory complex (N-DRC). The complex is positioned parallel to N-DRC and forms a connection between the arch at the base of RS3, the IDA tail and N-DRC. The protein is Cilia- and flagella-associated protein 263 (cfap263) of Danio rerio (Zebrafish).